Consider the following 545-residue polypeptide: Chaperonin GroEL (545 aa).

ATP is bound by residues 29–32, 86–90, Gly413, 476–478, and Asp492; these read TLGP, DGTTT, and NAA.

This sequence belongs to the chaperonin (HSP60) family. Forms a cylinder of 14 subunits composed of two heptameric rings stacked back-to-back. Interacts with the co-chaperonin GroES.

It is found in the cytoplasm. It carries out the reaction ATP + H2O + a folded polypeptide = ADP + phosphate + an unfolded polypeptide.. Functionally, together with its co-chaperonin GroES, plays an essential role in assisting protein folding. The GroEL-GroES system forms a nano-cage that allows encapsulation of the non-native substrate proteins and provides a physical environment optimized to promote and accelerate protein folding. The protein is Chaperonin GroEL of Shouchella clausii (strain KSM-K16) (Alkalihalobacillus clausii).